A 448-amino-acid chain; its full sequence is Glutamate--tRNA ligase 1 (448 aa).

The short motif at Pro10–Asn20 is the 'HIGH' region element. The short motif at Lys240–Arg244 is the 'KMSKS' region element. ATP is bound at residue Lys243.

This sequence belongs to the class-I aminoacyl-tRNA synthetase family. Glutamate--tRNA ligase type 1 subfamily. In terms of assembly, monomer.

The protein resides in the cytoplasm. The enzyme catalyses tRNA(Glu) + L-glutamate + ATP = L-glutamyl-tRNA(Glu) + AMP + diphosphate. Its function is as follows. Catalyzes the attachment of glutamate to tRNA(Glu) in a two-step reaction: glutamate is first activated by ATP to form Glu-AMP and then transferred to the acceptor end of tRNA(Glu). This is Glutamate--tRNA ligase 1 from Rickettsia typhi (strain ATCC VR-144 / Wilmington).